A 244-amino-acid chain; its full sequence is Carboxy-S-adenosyl-L-methionine synthase (244 aa).

S-adenosyl-L-methionine contacts are provided by residues Tyr40, 65–67, 90–91, 119–120, Asn134, and Arg201; these read GCS, DN, and DL.

The protein belongs to the class I-like SAM-binding methyltransferase superfamily. Cx-SAM synthase family. Homodimer.

The enzyme catalyses prephenate + S-adenosyl-L-methionine = carboxy-S-adenosyl-L-methionine + 3-phenylpyruvate + H2O. Its function is as follows. Catalyzes the conversion of S-adenosyl-L-methionine (SAM) to carboxy-S-adenosyl-L-methionine (Cx-SAM). The polypeptide is Carboxy-S-adenosyl-L-methionine synthase (Trichlorobacter lovleyi (strain ATCC BAA-1151 / DSM 17278 / SZ) (Geobacter lovleyi)).